Here is a 270-residue protein sequence, read N- to C-terminus: tRNA pseudouridine synthase A (270 aa).

Asp60 (nucleophile) is an active-site residue. Residues 107 to 111 are RNA binding; the sequence is FHARF. Residue Tyr118 coordinates substrate. Residues 168–172 form an interaction with tRNA region; sequence QCQSR.

Belongs to the tRNA pseudouridine synthase TruA family. In terms of assembly, homodimer.

It carries out the reaction uridine(38/39/40) in tRNA = pseudouridine(38/39/40) in tRNA. Its function is as follows. Formation of pseudouridine at positions 38, 39 and 40 in the anticodon stem and loop of transfer RNAs. In Shigella boydii serotype 18 (strain CDC 3083-94 / BS512), this protein is tRNA pseudouridine synthase A.